The following is a 361-amino-acid chain: MNSSIFNKLKSLRNRYEEIEIMLSQKDTISNQEKFKNLSKEYLQISEIVKNFIKWEKLETDIKNINLLFNDVEMHDIAQEELFIVKKQKKKLEEKIKILLLPVDPNDQHSCFIEIRAATGGDESSIFAGELFRMYTRYAENYMWKTEIMSSSENERGGFKEIIAKVTGKGACGRLKFESGGHRVQRVPETESQGRIHTSTCTVAIMPVRPKTKKEEIKVSDLKIDTFRSSGAGGQHVNTTDSAIRITHIPSGNVVECQDERSQHKNKAKALSILSARVYADKLAKSQKENSSMRRILLGTGERSDRNRTYNFAQNRITDHRINLTIYKLNEVLQGKLDLLIDPIMQEYQADMLSSLSEFKL.

Gln-235 is modified (N5-methylglutamine).

The protein belongs to the prokaryotic/mitochondrial release factor family. Methylated by PrmC. Methylation increases the termination efficiency of RF1.

It is found in the cytoplasm. Its function is as follows. Peptide chain release factor 1 directs the termination of translation in response to the peptide chain termination codons UAG and UAA. In Buchnera aphidicola subsp. Schizaphis graminum (strain Sg), this protein is Peptide chain release factor 1.